The sequence spans 456 residues: RuvB-like 1 (456 aa).

Gly70–Thr77 lines the ATP pocket.

This sequence belongs to the RuvB family. In terms of assembly, forms homohexameric rings. Can form a dodecamer with ruvbl2 made of two stacked hexameric rings. Is a component of the RNA polymerase II holoenzyme complex. Component of the chromatin-remodeling Ino80 complex. Component of some MLL1/MLL complex.

It is found in the nucleus. It localises to the dynein axonemal particle. The catalysed reaction is ATP + H2O = ADP + phosphate + H(+). Has single-stranded DNA-stimulated ATPase and ATP-dependent DNA helicase (3' to 5') activity suggesting a role in nuclear processes such as recombination and transcription. Proposed core component of the chromatin remodeling INO80 complex which exhibits DNA- and nucleosome-activated ATPase activity and catalyzes ATP-dependent nucleosome sliding. The polypeptide is RuvB-like 1 (ruvbl1) (Xenopus laevis (African clawed frog)).